Reading from the N-terminus, the 60-residue chain is MAVQQNKKSRSARDMRRSHDALEASTLSVEKSTGEVHLRHHVSPEGVYRGRKVIDKGADE.

The tract at residues 1-60 (MAVQQNKKSRSARDMRRSHDALEASTLSVEKSTGEVHLRHHVSPEGVYRGRKVIDKGADE) is disordered. Basic and acidic residues predominate over residues 11 to 22 (SARDMRRSHDAL).

This sequence belongs to the bacterial ribosomal protein bL32 family.

This is Large ribosomal subunit protein bL32 from Ectopseudomonas mendocina (strain ymp) (Pseudomonas mendocina).